We begin with the raw amino-acid sequence, 141 residues long: Cystatin-SN (141 aa).

The N-terminal stretch at 1–20 (MAQYLSTLLLLLATLAVALA) is a signal peptide. Positions 76-80 (QTVGG) match the Secondary area of contact motif. 2 disulfides stabilise this stretch: Cys94–Cys104 and Cys118–Cys138.

This sequence belongs to the cystatin family. Expressed in submandibular and sublingual saliva but not in parotid saliva (at protein level). Expressed in saliva, tears, urine and seminal fluid.

It localises to the secreted. In terms of biological role, human saliva appears to contain several cysteine proteinase inhibitors that are immunologically related to cystatin S but that differ in their specificity due to amino acid sequence differences. Cystatin SN, with a pI of 7.5, is a much better inhibitor of papain and dipeptidyl peptidase I than is cystatin S, although both inhibit ficin equally well. The polypeptide is Cystatin-SN (CST1) (Homo sapiens (Human)).